A 170-amino-acid polypeptide reads, in one-letter code: Orotate phosphoribosyltransferase (170 aa).

Residues R86, K87, K90, H92, and 111 to 119 (EDVTTSGGS) contribute to the 5-phospho-alpha-D-ribose 1-diphosphate site. 2 residues coordinate orotate: T115 and R143.

This sequence belongs to the purine/pyrimidine phosphoribosyltransferase family. PyrE subfamily. As to quaternary structure, homodimer. Requires Mg(2+) as cofactor.

The enzyme catalyses orotidine 5'-phosphate + diphosphate = orotate + 5-phospho-alpha-D-ribose 1-diphosphate. It participates in pyrimidine metabolism; UMP biosynthesis via de novo pathway; UMP from orotate: step 1/2. In terms of biological role, catalyzes the transfer of a ribosyl phosphate group from 5-phosphoribose 1-diphosphate to orotate, leading to the formation of orotidine monophosphate (OMP). The chain is Orotate phosphoribosyltransferase from Methanoculleus marisnigri (strain ATCC 35101 / DSM 1498 / JR1).